The chain runs to 37 residues: Cytochrome b6-f complex subunit 5 (37 aa).

A helical transmembrane segment spans residues leucine 5–alanine 25.

The protein belongs to the PetG family. The 4 large subunits of the cytochrome b6-f complex are cytochrome b6, subunit IV (17 kDa polypeptide, PetD), cytochrome f and the Rieske protein, while the 4 small subunits are PetG, PetL, PetM and PetN. The complex functions as a dimer.

It localises to the plastid. It is found in the chloroplast thylakoid membrane. Functionally, component of the cytochrome b6-f complex, which mediates electron transfer between photosystem II (PSII) and photosystem I (PSI), cyclic electron flow around PSI, and state transitions. PetG is required for either the stability or assembly of the cytochrome b6-f complex. This Rhodomonas salina (Cryptomonas salina) protein is Cytochrome b6-f complex subunit 5.